Here is a 374-residue protein sequence, read N- to C-terminus: Alanine racemase (374 aa).

Lysine 40 serves as the catalytic Proton acceptor; specific for D-alanine. Position 40 is an N6-(pyridoxal phosphate)lysine (lysine 40). Substrate is bound at residue arginine 136. Catalysis depends on tyrosine 264, which acts as the Proton acceptor; specific for L-alanine. Position 311 (methionine 311) interacts with substrate.

The protein belongs to the alanine racemase family. Requires pyridoxal 5'-phosphate as cofactor.

The enzyme catalyses L-alanine = D-alanine. The protein operates within amino-acid biosynthesis; D-alanine biosynthesis; D-alanine from L-alanine: step 1/1. In terms of biological role, catalyzes the interconversion of L-alanine and D-alanine. May also act on other amino acids. This chain is Alanine racemase (alr), found in Pediococcus pentosaceus (strain ATCC 25745 / CCUG 21536 / LMG 10740 / 183-1w).